A 419-amino-acid polypeptide reads, in one-letter code: Synaptosomal-associated protein 47 (419 aa).

T-SNARE coiled-coil homology domains are found at residues 108–170 and 356–418; these read PQGA…LSEL and VLQP…MRKL.

This sequence belongs to the SVAP1 family.

Its function is as follows. May play a role in intracellular membrane fusion. This is Synaptosomal-associated protein 47 (snap47) from Danio rerio (Zebrafish).